The primary structure comprises 283 residues: 2-dehydro-3-deoxyphosphooctonate aldolase (283 aa).

Belongs to the KdsA family.

The protein localises to the cytoplasm. The catalysed reaction is D-arabinose 5-phosphate + phosphoenolpyruvate + H2O = 3-deoxy-alpha-D-manno-2-octulosonate-8-phosphate + phosphate. The protein operates within carbohydrate biosynthesis; 3-deoxy-D-manno-octulosonate biosynthesis; 3-deoxy-D-manno-octulosonate from D-ribulose 5-phosphate: step 2/3. Its pathway is bacterial outer membrane biogenesis; lipopolysaccharide biosynthesis. This is 2-dehydro-3-deoxyphosphooctonate aldolase from Vibrio campbellii (strain ATCC BAA-1116).